The following is a 293-amino-acid chain: Exosome complex component RRP4 (293 aa).

Positions 1-20 (MALEMRLPKARKPLSESLGR) are disordered. In terms of domain architecture, S1 motif spans 79–159 (EVGDIVVGRI…SDGAVSLHTR (81 aa)). The residue at position 124 (Ser124) is a Phosphoserine.

It belongs to the RRP4 family. As to quaternary structure, component of the RNA exosome core complex (Exo-9), composed of EXOSC1, EXOSC2, EXOSC3, EXOSC4, EXOSC5, EXOSC6, EXOSC7, EXOSC8 and EXOSC9; within the complex interacts with EXOSC4 and EXOSC7. The catalytically inactive RNA exosome core complex (Exo-9) associates with the catalytic subunit EXOSC10/RRP6. Exo-9 may associate with DIS3 to form the nucleolar exosome complex, or DIS3L to form the cytoplasmic exosome complex. Exo-9 is formed by a hexameric base ring consisting of the heterodimers EXOSC4-EXOSC9, EXOSC5-EXOSC8 and EXOSC6-EXOSC7, and a cap ring consisting of EXOSC1, EXOSC2 and EXOSC3. The RNA exosome complex associates with cofactors C1D/RRP47, MPHOSPH6/MPP6 and MTREX/MTR4. Interacts with GTPBP1. Interacts with ZFP36L1 (via N-terminus).

The protein localises to the cytoplasm. It is found in the nucleus. It localises to the nucleolus. Its function is as follows. Non-catalytic component of the RNA exosome complex which has 3'-&gt;5' exoribonuclease activity and participates in a multitude of cellular RNA processing and degradation events. In the nucleus, the RNA exosome complex is involved in proper maturation of stable RNA species such as rRNA, snRNA and snoRNA, in the elimination of RNA processing by-products and non-coding 'pervasive' transcripts, such as antisense RNA species and promoter-upstream transcripts (PROMPTs), and of mRNAs with processing defects, thereby limiting or excluding their export to the cytoplasm. The RNA exosome may be involved in Ig class switch recombination (CSR) and/or Ig variable region somatic hypermutation (SHM) by targeting AICDA deamination activity to transcribed dsDNA substrates. In the cytoplasm, the RNA exosome complex is involved in general mRNA turnover and specifically degrades inherently unstable mRNAs containing AU-rich elements (AREs) within their 3' untranslated regions, and in RNA surveillance pathways, preventing translation of aberrant mRNAs. It seems to be involved in degradation of histone mRNA. The catalytic inactive RNA exosome core complex of 9 subunits (Exo-9) is proposed to play a pivotal role in the binding and presentation of RNA for ribonucleolysis, and to serve as a scaffold for the association with catalytic subunits and accessory proteins or complexes. EXOSC2 as peripheral part of the Exo-9 complex stabilizes the hexameric ring of RNase PH-domain subunits through contacts with EXOSC4 and EXOSC7. The polypeptide is Exosome complex component RRP4 (Exosc2) (Mus musculus (Mouse)).